Consider the following 420-residue polypeptide: Acetyl-CoA acetyltransferase, mitochondrial (420 aa).

The transit peptide at 1–26 (MTSRALYSTRSQLCRHLAHKYLSRSY) directs the protein to the mitochondrion. The active-site Acyl-thioester intermediate is Cys119. CoA-binding positions include Tyr212, 251–253 (KVD), and Lys256. Tyr212 serves as a coordination point for K(+). Residues Ala273, Ala274, and Ala276 each coordinate K(+). Position 277 (Ser277) interacts with CoA. Val374 serves as a coordination point for K(+). Cys406 serves as the catalytic Proton donor/acceptor.

It belongs to the thiolase-like superfamily. Thiolase family. In terms of assembly, homotetramer.

The protein resides in the mitochondrion. The enzyme catalyses 2 acetyl-CoA = acetoacetyl-CoA + CoA. It catalyses the reaction propanoyl-CoA + acetyl-CoA = 2-methyl-3-oxobutanoyl-CoA + CoA. It functions in the pathway lipid metabolism; fatty acid beta-oxidation. Its function is as follows. This is one of the enzymes that catalyzes the last step of the mitochondrial beta-oxidation pathway, an aerobic process breaking down fatty acids into acetyl-CoA. Using free coenzyme A/CoA, catalyzes the thiolytic cleavage of medium- to long-chain 3-oxoacyl-CoAs into acetyl-CoA and a fatty acyl-CoA shortened by two carbon atoms. The activity of the enzyme is reversible and it can also catalyze the condensation of two acetyl-CoA molecules into acetoacetyl-CoA. Thereby, it plays a major role in ketone body metabolism. This chain is Acetyl-CoA acetyltransferase, mitochondrial (acat1), found in Danio rerio (Zebrafish).